Reading from the N-terminus, the 384-residue chain is Prokineticin receptor 2 (384 aa).

At 1–54 (MAAQNGNTSFTPNFNPPQDHASSLSFNFSYGDYDLPMDEDEDMTKTRTFFAAKI) the chain is on the extracellular side. Asn-7 and Asn-27 each carry an N-linked (GlcNAc...) asparagine glycan. Residues 55 to 75 (VIGIALAGIMLVCGIGNFVFI) traverse the membrane as a helical segment. The Cytoplasmic segment spans residues 76 to 89 (AALTRYKKLRNLTN). The helical transmembrane segment at 90–110 (LLIANLAISDFLVAIICCPFE) threads the bilayer. Residues 111 to 136 (MDYYVVRQLSWEHGHVLCASVNYLRT) are Extracellular-facing. Cys-128 and Cys-208 form a disulfide bridge. A helical membrane pass occupies residues 137-157 (VSLYVSTNALLAIAIDRYLAI). Residues 158-171 (VHPLKPRMNYQTAS) are Cytoplasmic-facing. A helical membrane pass occupies residues 172–192 (FLIALVWMVSILIAIPSAYFA). Over 193-223 (TETVLFIVKSQEKIFCGQIWPVDQQLYYKSY) the chain is Extracellular. Residues 224–244 (FLFIFGVEFVGPVVTMTLCYA) traverse the membrane as a helical segment. Topologically, residues 245-273 (RISRELWFKAVPGFQTEQIRKRLRCRRKT) are cytoplasmic. The helical transmembrane segment at 274–294 (VLVLMCILTAYVLCWAPFYGF) threads the bilayer. Topologically, residues 295 to 313 (TIVRDFFPTVFVKEKHYLT) are extracellular. A helical membrane pass occupies residues 314–334 (AFYVVECIAMSNSMINTVCFV). The Cytoplasmic segment spans residues 335–384 (TVKNNTMKYFKKMMLLHWRPSQRGSKSSADLDLRTNGVPTTEEVDCIRLK).

This sequence belongs to the G-protein coupled receptor 1 family. As to quaternary structure, homodimer. In terms of tissue distribution, expressed in the ileocecum, thyroid gland, pituitary gland, salivary gland, adrenal gland, testis, ovary and brain.

It is found in the cell membrane. Receptor for prokineticin 2. Exclusively coupled to the G(q) subclass of heteromeric G proteins. Activation leads to mobilization of calcium, stimulation of phosphoinositide turnover and activation of p44/p42 mitogen-activated protein kinase. This chain is Prokineticin receptor 2 (PROKR2), found in Homo sapiens (Human).